We begin with the raw amino-acid sequence, 334 residues long: MLKTTIIGASGYTGAELAFMVNKHPQLTLSGLYVSANSVDAGKTIAQLHGKLANVVDMVVNALTDPKQVAQDSDVVFLATAHEVSHDLAPIFLEAGCQVFDLSGAFRVKSDGFYDTFYGFEHQFNNWLDKAAYGLAEWNQEEIKNAPLVAVAGCYPTASQLAIKPLLVDGLLDTQQWPVINATSGVSGAGRKASMTNSFCEVSLQPYGVFNHRHQPEIAQHLGCDVIFTPHLGNFKRGILATVTMKLAQGVTEQQVAQAFEQAYQGKPAVRLKGDGIPRIQDVENTPFCDIGWKVQGEHIIVISAIDNLLKGASSQAMQCLNIHYGYPELTALL.

Cysteine 154 is an active-site residue.

This sequence belongs to the NAGSA dehydrogenase family. Type 1 subfamily.

The protein resides in the cytoplasm. It carries out the reaction N-acetyl-L-glutamate 5-semialdehyde + phosphate + NADP(+) = N-acetyl-L-glutamyl 5-phosphate + NADPH + H(+). It functions in the pathway amino-acid biosynthesis; L-arginine biosynthesis; N(2)-acetyl-L-ornithine from L-glutamate: step 3/4. Catalyzes the NADPH-dependent reduction of N-acetyl-5-glutamyl phosphate to yield N-acetyl-L-glutamate 5-semialdehyde. In Vibrio parahaemolyticus serotype O3:K6 (strain RIMD 2210633), this protein is N-acetyl-gamma-glutamyl-phosphate reductase.